The primary structure comprises 666 residues: Zinc finger protein 710 (666 aa).

Residues lysine 110 and lysine 113 each participate in a glycyl lysine isopeptide (Lys-Gly) (interchain with G-Cter in SUMO2) cross-link. The segment at 113 to 141 is disordered; sequence KAEEEEEQEVYEVSVPGDDKDPGPAEAPA. 3 consecutive C2H2-type zinc fingers follow at residues 297–319, 325–347, and 353–375; these read WQCR…ILGH, HSCP…LLTH, and HKCQ…MLLH. Lysine 379 participates in a covalent cross-link: Glycyl lysine isopeptide (Lys-Gly) (interchain with G-Cter in SUMO2). C2H2-type zinc fingers lie at residues 381–403, 409–431, 437–459, 465–487, 493–515, 521–543, 549–571, and 577–600; these read YSCH…EVKH, HVCV…LASH, YQCL…MLKH, FVCT…SLTH, FKCE…MLIH, YQCH…MIVH, FKCK…MHLH, and FKCP…KVKH.

Belongs to the krueppel C2H2-type zinc-finger protein family.

The protein resides in the nucleus. Functionally, may be involved in transcriptional regulation. The chain is Zinc finger protein 710 (Znf710) from Mus musculus (Mouse).